The following is a 424-amino-acid chain: Galacturonokinase (424 aa).

Ser2 is modified (N-acetylserine). Residue 146–155 (DSSGLSSSAA) coordinates ATP. Asp197 acts as the Proton acceptor in catalysis.

Belongs to the GHMP kinase family. It depends on Mg(2+) as a cofactor. Mn(2+) serves as cofactor. Requires Ca(2+) as cofactor. In terms of tissue distribution, expressed in roots, stems, leaves, flowers and young siliques. Higher expression in the elongating middle stem region than in the lower or upper stem region.

The enzyme catalyses D-galacturonate + ATP = 1-phospho-alpha-D-galacturonate + ADP + H(+). Inhibited by EDTA and ADP. Its function is as follows. Sugar-1-kinase with a strict substrate specificity for the alpha-anomeric configuration of D-galacturonic acid (D-GalA) and ATP. Involved in the biosynthesis of UDP-galacturonic acid (UDP-GalA) from the salvaged GalA that is released during growth-dependent cell wall restructuring. This chain is Galacturonokinase (GALAK), found in Arabidopsis thaliana (Mouse-ear cress).